Consider the following 413-residue polypeptide: Putative F-box protein At3g17560 (413 aa).

The 47-residue stretch at 9–55 (TKLLFDLPQDVIEEIFSKVPVTCLRRIRSTCKRLYALLKDRGFIRKH) folds into the F-box domain.

The chain is Putative F-box protein At3g17560 from Arabidopsis thaliana (Mouse-ear cress).